The primary structure comprises 323 residues: Acetyl-coenzyme A carboxylase carboxyl transferase subunit alpha (323 aa).

The CoA carboxyltransferase C-terminal domain occupies 32 to 293; it reads NISEEVAKLQ…RKALAAQLES (262 aa).

This sequence belongs to the AccA family. In terms of assembly, acetyl-CoA carboxylase is a heterohexamer composed of biotin carboxyl carrier protein (AccB), biotin carboxylase (AccC) and two subunits each of ACCase subunit alpha (AccA) and ACCase subunit beta (AccD).

The protein localises to the cytoplasm. It catalyses the reaction N(6)-carboxybiotinyl-L-lysyl-[protein] + acetyl-CoA = N(6)-biotinyl-L-lysyl-[protein] + malonyl-CoA. It participates in lipid metabolism; malonyl-CoA biosynthesis; malonyl-CoA from acetyl-CoA: step 1/1. Component of the acetyl coenzyme A carboxylase (ACC) complex. First, biotin carboxylase catalyzes the carboxylation of biotin on its carrier protein (BCCP) and then the CO(2) group is transferred by the carboxyltransferase to acetyl-CoA to form malonyl-CoA. The protein is Acetyl-coenzyme A carboxylase carboxyl transferase subunit alpha of Alcanivorax borkumensis (strain ATCC 700651 / DSM 11573 / NCIMB 13689 / SK2).